The primary structure comprises 513 residues: Flagellin A (513 aa).

It belongs to the bacterial flagellin family. In terms of assembly, heteromer of FlaA and FlaB. FlaB is located proximal to the hook while the remainder of the filament is composed of the predominant FlaA.

The protein resides in the secreted. It localises to the bacterial flagellum. In terms of biological role, flagellin is the subunit protein which polymerizes to form the filaments of bacterial flagella. Important for motility and virulence. This chain is Flagellin A (flaA), found in Helicobacter felis (strain ATCC 49179 / CCUG 28539 / NCTC 12436 / CS1).